A 632-amino-acid polypeptide reads, in one-letter code: tRNA endonuclease VMS1 (632 aa).

A C2H2-type zinc finger spans residues 72-96 (MRCSVCQMSFDSRNEQKAHYQTDYH). Positions 123–155 (HGIKSEDENSGGEQTSSDHEESEEASDRDPDLQ) are disordered. The 161-residue stretch at 232–392 (PMAISALFMV…KKAWCELSYL (161 aa)) folds into the VLRF1 domain. Residue Gln295 is part of the active site. ANK repeat units lie at residues 470 to 500 (LTPT…DPTI) and 504 to 530 (LGRT…NLGE). 2 coiled-coil regions span residues 544 to 582 (LSRE…QRFA) and 608 to 632 (TDEQ…KKKY). The span at 578–589 (KQRFAKDAERGP) shows a compositional bias: basic and acidic residues. The interval 578-632 (KQRFAKDAERGPGKKLTNIPSIQQQNLNSLTDEQRRRLMREQRARAAEERMKKKY) is disordered. A compositionally biased stretch (polar residues) spans 595–608 (NIPSIQQQNLNSLT). Basic and acidic residues predominate over residues 609–632 (DEQRRRLMREQRARAAEERMKKKY).

It belongs to the ANKZF1/VMS1 family. In terms of assembly, associates with 60S ribosomal subunit. Interacts with CDC48. Interacts with NPL4.

The protein resides in the cytoplasm. The protein localises to the mitochondrion. It is found in the endoplasmic reticulum membrane. Endonuclease that cleaves polypeptidyl-tRNAs downstream of the ribosome-associated quality control (RQC) pathway to release incompletely synthesized polypeptides for degradation. The RQC pathway disassembles aberrantly stalled translation complexes to recycle or degrade the constituent parts. VMS1 acts downstream disassembly of stalled ribosomes and specifically cleaves off the terminal 3'-CCA nucleotides universal to all tRNAs from polypeptidyl-tRNAs, releasing (1) ubiquitinated polypeptides from 60S ribosomal subunit for degradation by the ERAD pathway and (2) cleaved tRNAs for recycling. Component of an evolutionarily conserved system for ubiquitin-mediated mitochondria-associated protein degradation (MAD), which is necessary to maintain mitochondrial, cellular, and organismal viability. The chain is tRNA endonuclease VMS1 from Saccharomyces cerevisiae (strain ATCC 204508 / S288c) (Baker's yeast).